The following is a 229-amino-acid chain: Cytochrome c oxidase subunit 2 (229 aa).

The Mitochondrial intermembrane portion of the chain corresponds to 1–26 (MANWTQLGLQDASSPLMEELIYFHDY). Residues 27-48 (TLIILTLITILVFYGLASLLFS) form a helical membrane-spanning segment. At 49-62 (SNTNRFFLEGQGLE) the chain is on the mitochondrial matrix side. The helical transmembrane segment at 63–82 (TVWTIIPAVILIFIALPSLQ) threads the bilayer. Residues 83-229 (LLYLMDEVNN…ETWVSNFITE (147 aa)) are Mitochondrial intermembrane-facing. Cu cation is bound by residues His-161, Cys-196, Glu-198, Cys-200, His-204, and Met-207. Glu-198 provides a ligand contact to Mg(2+).

Belongs to the cytochrome c oxidase subunit 2 family. In terms of assembly, component of the cytochrome c oxidase (complex IV, CIV), a multisubunit enzyme composed of a catalytic core of 3 subunits and several supernumerary subunits. The complex exists as a monomer or a dimer and forms supercomplexes (SCs) in the inner mitochondrial membrane with ubiquinol-cytochrome c oxidoreductase (cytochrome b-c1 complex, complex III, CIII). It depends on Cu cation as a cofactor.

Its subcellular location is the mitochondrion inner membrane. The catalysed reaction is 4 Fe(II)-[cytochrome c] + O2 + 8 H(+)(in) = 4 Fe(III)-[cytochrome c] + 2 H2O + 4 H(+)(out). Functionally, component of the cytochrome c oxidase, the last enzyme in the mitochondrial electron transport chain which drives oxidative phosphorylation. The respiratory chain contains 3 multisubunit complexes succinate dehydrogenase (complex II, CII), ubiquinol-cytochrome c oxidoreductase (cytochrome b-c1 complex, complex III, CIII) and cytochrome c oxidase (complex IV, CIV), that cooperate to transfer electrons derived from NADH and succinate to molecular oxygen, creating an electrochemical gradient over the inner membrane that drives transmembrane transport and the ATP synthase. Cytochrome c oxidase is the component of the respiratory chain that catalyzes the reduction of oxygen to water. Electrons originating from reduced cytochrome c in the intermembrane space (IMS) are transferred via the dinuclear copper A center (CU(A)) of subunit 2 and heme A of subunit 1 to the active site in subunit 1, a binuclear center (BNC) formed by heme A3 and copper B (CU(B)). The BNC reduces molecular oxygen to 2 water molecules using 4 electrons from cytochrome c in the IMS and 4 protons from the mitochondrial matrix. The protein is Cytochrome c oxidase subunit 2 (COII) of Patiria pectinifera (Starfish).